Reading from the N-terminus, the 162-residue chain is Peroxiredoxin-2C (162 aa).

The Thioredoxin domain maps to Ile-4–Leu-162. The Cysteine sulfenic acid (-SOH) intermediate role is filled by Cys-51.

It belongs to the peroxiredoxin family. Prx5 subfamily. As to quaternary structure, monomer. Highly expressed in buds and flowers. Slightly expressed in green tissues. Also detected in pollen.

The protein resides in the cytoplasm. It catalyses the reaction [glutaredoxin]-dithiol + a hydroperoxide = [glutaredoxin]-disulfide + an alcohol + H2O. Its function is as follows. Thiol-specific peroxidase that catalyzes the reduction of hydrogen peroxide and organic hydroperoxides to water and alcohols, respectively. Plays a role in cell protection against oxidative stress by detoxifying peroxides and as sensor of hydrogen peroxide-mediated signaling events. This Arabidopsis thaliana (Mouse-ear cress) protein is Peroxiredoxin-2C (PRXIIC).